Here is a 129-residue protein sequence, read N- to C-terminus: MEKNNKEDVTPLGGYILAKDPISFNEDRPVIQLRVRNSGDRPIQVGSHFHFFEVNKALQFNRAAAFGKRLNITATTAIRFEPGDEIEVSLIPIGGKQNVYGFNNLVDGWAGKSPVAIDEPVETTWLHAG.

This sequence belongs to the urease beta subunit family. In terms of assembly, heterotrimer of UreA (gamma), UreB (beta) and UreC (alpha) subunits. Three heterotrimers associate to form the active enzyme.

Its subcellular location is the cytoplasm. It catalyses the reaction urea + 2 H2O + H(+) = hydrogencarbonate + 2 NH4(+). Its pathway is nitrogen metabolism; urea degradation; CO(2) and NH(3) from urea (urease route): step 1/1. This chain is Urease subunit beta, found in Photorhabdus laumondii subsp. laumondii (strain DSM 15139 / CIP 105565 / TT01) (Photorhabdus luminescens subsp. laumondii).